Reading from the N-terminus, the 360-residue chain is Protein Wnt-2 (360 aa).

The signal sequence occupies residues 1-25; sequence MNAPLCGIWLWLPLLLTWLTPEVSS. 11 disulfides stabilise this stretch: C76–C87, C127–C135, C137–C157, C206–C220, C208–C215, C278–C309, C294–C304, C308–C348, C324–C339, C326–C336, and C331–C332. The O-palmitoleoyl serine; by PORCN moiety is linked to residue S212. The N-linked (GlcNAc...) asparagine glycan is linked to N295.

It belongs to the Wnt family. Post-translationally, palmitoleoylation is required for efficient binding to frizzled receptors. Depalmitoleoylation leads to Wnt signaling pathway inhibition.

The protein resides in the secreted. It is found in the extracellular space. It localises to the extracellular matrix. In terms of biological role, ligand for members of the frizzled family of seven transmembrane receptors. Functions in the canonical Wnt signaling pathway that results in activation of transcription factors of the TCF/LEF family. Functions as a upstream regulator of FGF10 expression. Plays an important role in embryonic lung development. May contribute to embryonic brain development by regulating the proliferation of dopaminergic precursors and neurons. This Otolemur garnettii (Small-eared galago) protein is Protein Wnt-2 (WNT2).